The primary structure comprises 539 residues: CTP synthase (539 aa).

Residues 1–267 form an amidoligase domain region; the sequence is MTKYIFVTGG…DQKVVDFLHI (267 aa). S13 contacts CTP. S13 lines the UTP pocket. 14 to 19 lines the ATP pocket; it reads SLGKGI. Y54 serves as a coordination point for L-glutamine. D71 lines the ATP pocket. 2 residues coordinate Mg(2+): D71 and E141. CTP is bound by residues 148–150, 188–193, and K224; these read DME and KSKPTQ. UTP-binding positions include 188 to 193 and K224; that span reads KSKPTQ. Positions 294–537 constitute a Glutamine amidotransferase type-1 domain; it reads KITLVGKYVE…IGAASGLQVD (244 aa). G356 is an L-glutamine binding site. The Nucleophile; for glutamine hydrolysis role is filled by C383. L-glutamine-binding positions include 384 to 387, E407, and R465; that span reads LGMQ. Catalysis depends on residues H510 and E512.

This sequence belongs to the CTP synthase family. Homotetramer.

It catalyses the reaction UTP + L-glutamine + ATP + H2O = CTP + L-glutamate + ADP + phosphate + 2 H(+). It carries out the reaction L-glutamine + H2O = L-glutamate + NH4(+). The catalysed reaction is UTP + NH4(+) + ATP = CTP + ADP + phosphate + 2 H(+). Its pathway is pyrimidine metabolism; CTP biosynthesis via de novo pathway; CTP from UDP: step 2/2. Allosterically activated by GTP, when glutamine is the substrate; GTP has no effect on the reaction when ammonia is the substrate. The allosteric effector GTP functions by stabilizing the protein conformation that binds the tetrahedral intermediate(s) formed during glutamine hydrolysis. Inhibited by the product CTP, via allosteric rather than competitive inhibition. Catalyzes the ATP-dependent amination of UTP to CTP with either L-glutamine or ammonia as the source of nitrogen. Regulates intracellular CTP levels through interactions with the four ribonucleotide triphosphates. This is CTP synthase from Lactobacillus delbrueckii subsp. bulgaricus (strain ATCC BAA-365 / Lb-18).